The following is a 379-amino-acid chain: L-lactate dehydrogenase (379 aa).

Residues Met1–Arg379 form the FMN hydroxy acid dehydrogenase domain. Position 24 (Tyr24) interacts with substrate. FMN contacts are provided by Ser106 and Gln127. Tyr129 contacts substrate. Thr155 contacts FMN. Arg164 lines the substrate pocket. Lys251 contacts FMN. His275 serves as the catalytic Proton acceptor. Arg278 lines the substrate pocket. Position 306–330 (Asp306–Arg330) interacts with FMN.

It belongs to the FMN-dependent alpha-hydroxy acid dehydrogenase family. As to quaternary structure, homotetramer. The cofactor is FMN.

The protein resides in the cell inner membrane. The enzyme catalyses (S)-lactate + A = pyruvate + AH2. Catalyzes the conversion of L-lactate to pyruvate. Is coupled to the respiratory chain. In Ectopseudomonas mendocina (strain ymp) (Pseudomonas mendocina), this protein is L-lactate dehydrogenase.